The primary structure comprises 176 residues: Putative Ras-related protein RABA4e (176 aa).

It belongs to the small GTPase superfamily. Rab family.

The sequence is that of Putative Ras-related protein RABA4e (RABA4E) from Arabidopsis thaliana (Mouse-ear cress).